We begin with the raw amino-acid sequence, 457 residues long: Siroheme synthase 2 (457 aa).

The interval 1–204 is precorrin-2 dehydrogenase /sirohydrochlorin ferrochelatase; the sequence is MDHLPIFCQL…DDRQAVADTT (204 aa). Residues 22–23 and 43–44 each bind NAD(+); these read DV and LD. A Phosphoserine modification is found at S128. The uroporphyrinogen-III C-methyltransferase stretch occupies residues 216–457; the sequence is GEVVLVGAGP…RDKLNWFSNH (242 aa). P225 contacts S-adenosyl-L-methionine. D248 (proton acceptor) is an active-site residue. K270 functions as the Proton donor in the catalytic mechanism. Residues 301-303, I306, 331-332, M382, and G411 each bind S-adenosyl-L-methionine; these read GGD and TA.

The protein in the N-terminal section; belongs to the precorrin-2 dehydrogenase / sirohydrochlorin ferrochelatase family. In the C-terminal section; belongs to the precorrin methyltransferase family.

It carries out the reaction uroporphyrinogen III + 2 S-adenosyl-L-methionine = precorrin-2 + 2 S-adenosyl-L-homocysteine + H(+). The enzyme catalyses precorrin-2 + NAD(+) = sirohydrochlorin + NADH + 2 H(+). It catalyses the reaction siroheme + 2 H(+) = sirohydrochlorin + Fe(2+). It participates in cofactor biosynthesis; adenosylcobalamin biosynthesis; precorrin-2 from uroporphyrinogen III: step 1/1. Its pathway is cofactor biosynthesis; adenosylcobalamin biosynthesis; sirohydrochlorin from precorrin-2: step 1/1. The protein operates within porphyrin-containing compound metabolism; siroheme biosynthesis; precorrin-2 from uroporphyrinogen III: step 1/1. It functions in the pathway porphyrin-containing compound metabolism; siroheme biosynthesis; siroheme from sirohydrochlorin: step 1/1. It participates in porphyrin-containing compound metabolism; siroheme biosynthesis; sirohydrochlorin from precorrin-2: step 1/1. Multifunctional enzyme that catalyzes the SAM-dependent methylations of uroporphyrinogen III at position C-2 and C-7 to form precorrin-2 via precorrin-1. Then it catalyzes the NAD-dependent ring dehydrogenation of precorrin-2 to yield sirohydrochlorin. Finally, it catalyzes the ferrochelation of sirohydrochlorin to yield siroheme. In Klebsiella pneumoniae subsp. pneumoniae (strain ATCC 700721 / MGH 78578), this protein is Siroheme synthase 2.